The primary structure comprises 1233 residues: ATP-dependent helicase/nuclease subunit A (1233 aa).

Residues 3-474 (TKWTEEQKQA…ILLYKNFRSR (472 aa)) enclose the UvrD-like helicase ATP-binding domain. 24-31 (AAAGSGKT) is a binding site for ATP. One can recognise a UvrD-like helicase C-terminal domain in the interval 518–809 (VTGGAVELHL…RIMSIHKSKG (292 aa)). A disordered region spans residues 533 to 555 (VEEEVEEKEEEKNEEKDFEEEEE).

It belongs to the helicase family. AddA subfamily. In terms of assembly, heterodimer of AddA and AddB/RexB. Mg(2+) is required as a cofactor.

It carries out the reaction Couples ATP hydrolysis with the unwinding of duplex DNA by translocating in the 3'-5' direction.. It catalyses the reaction ATP + H2O = ADP + phosphate + H(+). The heterodimer acts as both an ATP-dependent DNA helicase and an ATP-dependent, dual-direction single-stranded exonuclease. Recognizes the chi site generating a DNA molecule suitable for the initiation of homologous recombination. The AddA nuclease domain is required for chi fragment generation; this subunit has the helicase and 3' -&gt; 5' nuclease activities. In Thermoanaerobacter pseudethanolicus (strain ATCC 33223 / 39E) (Clostridium thermohydrosulfuricum), this protein is ATP-dependent helicase/nuclease subunit A.